A 361-amino-acid chain; its full sequence is MTSSYRQQLQAKIDRITTQFSEFTPPTLEVFESPEQHFRMRAEFRIWHTENDMFYAMFERNGDGKQKTVVRIDEFPIADKSINDLMPLLLAELKANSLLSQRLFEVDFLATLSGEMLVTLIYHRKLNQEWEQAAKALAEKLNIKIMGRSRGQKIVIGDDFVVEEFELLNRSFKYKQIESSFTQPNAQVCKKMLQWACDAAEGSKKHLLELYCGNGNFTLPLSLKFERVLATELAKSSVYAAQWNIEQNQIDNIQVARLSAEEFTQAYQGEREFRRLQEADIDIQSYDFGTVFVDPPRAGIDDETLKLLQGFERIIYISCNPDTLYENLKTLTQTHRVTKFALFDQFPYTHHVESGVLLEKI.

Residues Q183, Y211, N216, E232, and D294 each contribute to the S-adenosyl-L-methionine site. C319 functions as the Nucleophile in the catalytic mechanism. E353 (proton acceptor) is an active-site residue.

It belongs to the class I-like SAM-binding methyltransferase superfamily. RNA M5U methyltransferase family. TrmA subfamily.

It carries out the reaction uridine(54) in tRNA + S-adenosyl-L-methionine = 5-methyluridine(54) in tRNA + S-adenosyl-L-homocysteine + H(+). The enzyme catalyses uridine(341) in tmRNA + S-adenosyl-L-methionine = 5-methyluridine(341) in tmRNA + S-adenosyl-L-homocysteine + H(+). In terms of biological role, dual-specificity methyltransferase that catalyzes the formation of 5-methyluridine at position 54 (m5U54) in all tRNAs, and that of position 341 (m5U341) in tmRNA (transfer-mRNA). The protein is tRNA/tmRNA (uracil-C(5))-methyltransferase of Acinetobacter baumannii (strain AYE).